Consider the following 271-residue polypeptide: Formamidopyrimidine-DNA glycosylase (271 aa).

Pro-2 serves as the catalytic Schiff-base intermediate with DNA. The active-site Proton donor is Glu-3. Catalysis depends on Lys-58, which acts as the Proton donor; for beta-elimination activity. Positions 92, 111, and 152 each coordinate DNA. Residues 237–271 (YVYGKVQKPCRICNNIITLIRQNGRSTYFCNACQN) form an FPG-type zinc finger. Catalysis depends on Arg-261, which acts as the Proton donor; for delta-elimination activity.

The protein belongs to the FPG family. In terms of assembly, monomer. Requires Zn(2+) as cofactor.

It carries out the reaction Hydrolysis of DNA containing ring-opened 7-methylguanine residues, releasing 2,6-diamino-4-hydroxy-5-(N-methyl)formamidopyrimidine.. It catalyses the reaction 2'-deoxyribonucleotide-(2'-deoxyribose 5'-phosphate)-2'-deoxyribonucleotide-DNA = a 3'-end 2'-deoxyribonucleotide-(2,3-dehydro-2,3-deoxyribose 5'-phosphate)-DNA + a 5'-end 5'-phospho-2'-deoxyribonucleoside-DNA + H(+). Its function is as follows. Involved in base excision repair of DNA damaged by oxidation or by mutagenic agents. Acts as a DNA glycosylase that recognizes and removes damaged bases. Has a preference for oxidized purines, such as 7,8-dihydro-8-oxoguanine (8-oxoG). Has AP (apurinic/apyrimidinic) lyase activity and introduces nicks in the DNA strand. Cleaves the DNA backbone by beta-delta elimination to generate a single-strand break at the site of the removed base with both 3'- and 5'-phosphates. In Wolbachia pipientis subsp. Culex pipiens (strain wPip), this protein is Formamidopyrimidine-DNA glycosylase.